A 241-amino-acid chain; its full sequence is Sugar fermentation stimulation protein homolog (241 aa).

It belongs to the SfsA family.

In Halorhodospira halophila (strain DSM 244 / SL1) (Ectothiorhodospira halophila (strain DSM 244 / SL1)), this protein is Sugar fermentation stimulation protein homolog.